The following is a 390-amino-acid chain: Curcumin synthase 3 (390 aa).

Residue cysteine 164 is part of the active site.

It belongs to the thiolase-like superfamily. Chalcone/stilbene synthases family. As to quaternary structure, homodimer.

The enzyme catalyses (E)-feruloylacetyl-CoA + (E)-feruloyl-CoA + H2O = curcumin + CO2 + 2 CoA. It catalyses the reaction (E)-feruloylacetyl-CoA + (E)-4-coumaroyl-CoA + H2O = demethoxycurcumin + CO2 + 2 CoA. The catalysed reaction is (4-coumaroyl)acetyl-CoA + 4-coumaroyl-CoA + H2O = bisdemethoxycurcumin + CO2 + 2 CoA. The protein operates within secondary metabolite biosynthesis; flavonoid biosynthesis. In terms of biological role, catalyzes the synthesis of curcumin by condensing feruloyl-CoA with a diketide-CoA in the curcuminoid biosynthesis. Also acts as a demethoxycurcumin synthase by accepting 4-coumaroyl-CoA as a starter substrate instead of feruloyl-CoA. The polypeptide is Curcumin synthase 3 (CURS3) (Curcuma longa (Turmeric)).